We begin with the raw amino-acid sequence, 349 residues long: Hydroxymethylglutaryl-CoA synthase (349 aa).

Positions 29 and 30 each coordinate (3S)-3-hydroxy-3-methylglutaryl-CoA. Glu81 acts as the Proton donor/acceptor in catalysis. (3S)-3-hydroxy-3-methylglutaryl-CoA-binding residues include Cys113 and Thr154. The Acyl-thioester intermediate role is filled by Cys113. Position 202 (Arg202) interacts with CoA. 2 residues coordinate (3S)-3-hydroxy-3-methylglutaryl-CoA: Thr204 and His237. The active-site Proton donor/acceptor is His237. Lys242 contributes to the CoA binding site. (3S)-3-hydroxy-3-methylglutaryl-CoA-binding residues include Lys246, Asn269, and Ser299.

It belongs to the thiolase-like superfamily. Archaeal HMG-CoA synthase family. In terms of assembly, interacts with acetoacetyl-CoA thiolase that catalyzes the precedent step in the pathway and with a DUF35 protein. The acetoacetyl-CoA thiolase/HMG-CoA synthase complex channels the intermediate via a fused CoA-binding site, which allows for efficient coupling of the endergonic thiolase reaction with the exergonic HMGCS reaction.

The enzyme catalyses acetoacetyl-CoA + acetyl-CoA + H2O = (3S)-3-hydroxy-3-methylglutaryl-CoA + CoA + H(+). It functions in the pathway metabolic intermediate biosynthesis; (R)-mevalonate biosynthesis; (R)-mevalonate from acetyl-CoA: step 2/3. In terms of biological role, catalyzes the condensation of acetyl-CoA with acetoacetyl-CoA to form 3-hydroxy-3-methylglutaryl-CoA (HMG-CoA). Functions in the mevalonate (MVA) pathway leading to isopentenyl diphosphate (IPP), a key precursor for the biosynthesis of isoprenoid compounds that are building blocks of archaeal membrane lipids. The sequence is that of Hydroxymethylglutaryl-CoA synthase from Methanosarcina barkeri (strain Fusaro / DSM 804).